A 644-amino-acid polypeptide reads, in one-letter code: DNA mismatch repair protein MutL (644 aa).

2 disordered regions span residues 353–399 and 420–440; these read SESG…SQLT and GSMAVPRESRSGPTGESRARA. The span at 370–381 shows a compositional bias: polar residues; the sequence is SPESKTHSTWNE. Over residues 383 to 399 the composition is skewed to basic and acidic residues; it reads SRVDTSRVEISRDSQLT.

It belongs to the DNA mismatch repair MutL/HexB family.

Functionally, this protein is involved in the repair of mismatches in DNA. It is required for dam-dependent methyl-directed DNA mismatch repair. May act as a 'molecular matchmaker', a protein that promotes the formation of a stable complex between two or more DNA-binding proteins in an ATP-dependent manner without itself being part of a final effector complex. In Shewanella sp. (strain MR-4), this protein is DNA mismatch repair protein MutL.